A 335-amino-acid polypeptide reads, in one-letter code: Adenosine deaminase (335 aa).

Zn(2+) contacts are provided by His12 and His14. Positions 14 and 16 each coordinate substrate. His197 is a binding site for Zn(2+). Glu200 functions as the Proton donor in the catalytic mechanism. Residue Asp278 participates in Zn(2+) binding.

This sequence belongs to the metallo-dependent hydrolases superfamily. Adenosine and AMP deaminases family. Adenosine deaminase subfamily. It depends on Zn(2+) as a cofactor.

The catalysed reaction is adenosine + H2O + H(+) = inosine + NH4(+). It catalyses the reaction 2'-deoxyadenosine + H2O + H(+) = 2'-deoxyinosine + NH4(+). Catalyzes the hydrolytic deamination of adenosine and 2-deoxyadenosine. The polypeptide is Adenosine deaminase (Clostridium botulinum (strain Loch Maree / Type A3)).